Consider the following 97-residue polypeptide: Co-chaperonin GroES (97 aa).

The protein belongs to the GroES chaperonin family. As to quaternary structure, heptamer of 7 subunits arranged in a ring. Interacts with the chaperonin GroEL.

The protein resides in the cytoplasm. Together with the chaperonin GroEL, plays an essential role in assisting protein folding. The GroEL-GroES system forms a nano-cage that allows encapsulation of the non-native substrate proteins and provides a physical environment optimized to promote and accelerate protein folding. GroES binds to the apical surface of the GroEL ring, thereby capping the opening of the GroEL channel. This Sodalis glossinidius (strain morsitans) protein is Co-chaperonin GroES.